The following is a 283-amino-acid chain: Pantothenate synthetase (283 aa).

An ATP-binding site is contributed by 26 to 33 (MGNLHEGH). The active-site Proton donor is His-33. Position 57 (Gln-57) interacts with (R)-pantoate. Gln-57 serves as a coordination point for beta-alanine. An ATP-binding site is contributed by 144–147 (GKKD). (R)-pantoate is bound at residue Gln-150. ATP is bound by residues Val-173 and 181 to 184 (LSSR).

It belongs to the pantothenate synthetase family. In terms of assembly, homodimer.

It is found in the cytoplasm. The enzyme catalyses (R)-pantoate + beta-alanine + ATP = (R)-pantothenate + AMP + diphosphate + H(+). The protein operates within cofactor biosynthesis; (R)-pantothenate biosynthesis; (R)-pantothenate from (R)-pantoate and beta-alanine: step 1/1. In terms of biological role, catalyzes the condensation of pantoate with beta-alanine in an ATP-dependent reaction via a pantoyl-adenylate intermediate. The polypeptide is Pantothenate synthetase (Ralstonia nicotianae (strain ATCC BAA-1114 / GMI1000) (Ralstonia solanacearum)).